The chain runs to 590 residues: UvrABC system protein C (590 aa).

The GIY-YIG domain occupies 14–91 (EQPGCYLMKD…IKKHDPKYNV (78 aa)). Residues 196–231 (EDVKRELAEKMHEAAETLEFERAKEYRDQIAAIEMT) form the UVR domain.

This sequence belongs to the UvrC family. Interacts with UvrB in an incision complex.

It localises to the cytoplasm. The UvrABC repair system catalyzes the recognition and processing of DNA lesions. UvrC both incises the 5' and 3' sides of the lesion. The N-terminal half is responsible for the 3' incision and the C-terminal half is responsible for the 5' incision. The polypeptide is UvrABC system protein C (Geobacillus kaustophilus (strain HTA426)).